Consider the following 545-residue polypeptide: Resolvase homolog YokA (545 aa).

A Resolvase/invertase-type recombinase catalytic domain is found at 14-165 (NILGYLRRSR…GAKYTYAAQG (152 aa)). A coiled-coil region spans residues 19-46 (LRRSRQDMEREKRTGEDTLTEQKELMNK). The active-site O-(5'-phospho-DNA)-serine intermediate is Ser-22. A DNA-binding region (recombinase) is located at residues 173 to 303 (PYGYQLNKKT…VKIANKVPLL (131 aa)). The stretch at 402 to 475 (NMKTKKQMSE…QDTQSEIDSN (74 aa)) forms a coiled coil.

This sequence in the N-terminal section; belongs to the site-specific recombinase resolvase family.

This Bacillus subtilis (strain 168) protein is Resolvase homolog YokA (yokA).